Here is a 144-residue protein sequence, read N- to C-terminus: Catabolic 3-dehydroquinase 1 (144 aa).

Y24 acts as the Proton acceptor in catalysis. Substrate contacts are provided by N75, H81, and D88. The active-site Proton donor is H101. Residues 102–103 (IS) and R112 contribute to the substrate site.

The protein belongs to the type-II 3-dehydroquinase family. In terms of assembly, homododecamer. Adopts a ring-like structure, composed of an arrangement of two hexameric rings stacked on top of one another.

It carries out the reaction 3-dehydroquinate = 3-dehydroshikimate + H2O. The protein operates within aromatic compound metabolism; 3,4-dihydroxybenzoate biosynthesis; 3,4-dihydroxybenzoate from 3-dehydroquinate: step 1/2. In terms of biological role, is involved in the catabolism of quinate. Allows the utilization of quinate as carbon source via the beta-ketoadipate pathway. The polypeptide is Catabolic 3-dehydroquinase 1 (Fusarium vanettenii (strain ATCC MYA-4622 / CBS 123669 / FGSC 9596 / NRRL 45880 / 77-13-4) (Fusarium solani subsp. pisi)).